The primary structure comprises 529 residues: Bifunctional purine biosynthesis protein PurH (529 aa).

In terms of domain architecture, MGS-like spans 8-158 (PSAPDLVAPK…KNHGYVAVCT (151 aa)).

It belongs to the PurH family.

It catalyses the reaction (6R)-10-formyltetrahydrofolate + 5-amino-1-(5-phospho-beta-D-ribosyl)imidazole-4-carboxamide = 5-formamido-1-(5-phospho-D-ribosyl)imidazole-4-carboxamide + (6S)-5,6,7,8-tetrahydrofolate. It carries out the reaction IMP + H2O = 5-formamido-1-(5-phospho-D-ribosyl)imidazole-4-carboxamide. It functions in the pathway purine metabolism; IMP biosynthesis via de novo pathway; 5-formamido-1-(5-phospho-D-ribosyl)imidazole-4-carboxamide from 5-amino-1-(5-phospho-D-ribosyl)imidazole-4-carboxamide (10-formyl THF route): step 1/1. The protein operates within purine metabolism; IMP biosynthesis via de novo pathway; IMP from 5-formamido-1-(5-phospho-D-ribosyl)imidazole-4-carboxamide: step 1/1. The protein is Bifunctional purine biosynthesis protein PurH of Caulobacter vibrioides (strain ATCC 19089 / CIP 103742 / CB 15) (Caulobacter crescentus).